A 248-amino-acid polypeptide reads, in one-letter code: Small ribosomal subunit protein uS2c (248 aa).

It belongs to the universal ribosomal protein uS2 family.

The protein localises to the plastid. It is found in the chloroplast. This is Small ribosomal subunit protein uS2c (rps2) from Trachelium caeruleum (Blue throatwort).